Consider the following 529-residue polypeptide: Cytochrome P450 monooxygenase atmQ (529 aa).

Helical transmembrane passes span 22 to 42 (YPFA…QQLA) and 51 to 71 (SWVN…IAAF). Cys467 is a binding site for heme.

This sequence belongs to the cytochrome P450 family. The cofactor is heme.

The protein resides in the membrane. It participates in secondary metabolite biosynthesis. Cytochrome P450 monooxygenase; part of the ATM2 gene cluster that mediates the biosynthesis of aflatrem, a tremorgenic mycotoxin with acute neurotoxic effects. Synthesis of geranylgeranyl diphosphate (GGPP) by AtmG (a GGPP synthase) precedes condensation of GGPP with indole 3-glycerol phosphate, followed by epoxidation and cyclization by AtmM (a FAD-dependent monooxygenase) and AtmC (a prenyltransferase) to produce paspaline. AtmB is also essential for paspaline production, but its exact role has not been identified yet. AtmP, a cytochrome P450 monooxygenase, subsequently converts paspaline to 13-desoxypaxilline via PC-M6 by removal of the C-30 methyl group and oxidation at C-10. AtmQ, a cytochrome P450 monooxygenase, then catalyzes the oxidation of 13-desoxypaxilline, first at C-7 to produce paspalicine and then at C-13 to form paspalinine. Finally, AtmD prenylates paspalinine to form aflatrem. This is Cytochrome P450 monooxygenase atmQ from Aspergillus flavus.